Here is a 637-residue protein sequence, read N- to C-terminus: Chaperone protein HtpG (637 aa).

Residues 1–345 (MSQQETHGFQ…SNDLPLNVSR (345 aa)) are a; substrate-binding. Residues 346–562 (EILQDNQVTT…EGEMSTQMIK (217 aa)) form a b region. The interval 563–637 (LMQAAGQAVP…MNQMLLANAK (75 aa)) is c.

Belongs to the heat shock protein 90 family. Homodimer.

It localises to the cytoplasm. Molecular chaperone. Has ATPase activity. The protein is Chaperone protein HtpG of Shewanella denitrificans (strain OS217 / ATCC BAA-1090 / DSM 15013).